The sequence spans 456 residues: Phosphomannomutase (456 aa).

Ser-98 (phosphoserine intermediate) is an active-site residue. Residues Ser-98, Asp-245, Asp-247, and Asp-249 each contribute to the Mg(2+) site.

This sequence belongs to the phosphohexose mutase family. The cofactor is Mg(2+).

The enzyme catalyses alpha-D-mannose 1-phosphate = D-mannose 6-phosphate. It functions in the pathway nucleotide-sugar biosynthesis; GDP-alpha-D-mannose biosynthesis; alpha-D-mannose 1-phosphate from D-fructose 6-phosphate: step 2/2. In terms of biological role, involved in the biosynthesis of the capsular polysaccharide colanic acid. In Salmonella typhimurium (strain LT2 / SGSC1412 / ATCC 700720), this protein is Phosphomannomutase (manB).